We begin with the raw amino-acid sequence, 177 residues long: B-phycoerythrin beta chain (177 aa).

Phycourobilin contacts are provided by C50 and C61. N4-methylasparagine is present on N72. 2 residues coordinate (2R,3E)-phycoerythrobilin: C82 and C158.

This sequence belongs to the phycobiliprotein family. In terms of assembly, heteromer of 6 alpha, 6 beta and one gamma chain. In terms of processing, contains two covalently linked phycoerythrobilin chromophores and one covalently linked phycourobilin chromophore.

The protein localises to the plastid. It is found in the chloroplast thylakoid membrane. Functionally, light-harvesting photosynthetic bile pigment-protein from the phycobiliprotein complex. In Porphyridium sordidum (Red alga), this protein is B-phycoerythrin beta chain (cpeB).